The following is a 270-amino-acid chain: Probable inner membrane protein BTH_II0599 (270 aa).

Helical transmembrane passes span 24 to 44 (RNPL…MLVS), 45 to 65 (LVPV…AVGF), 98 to 118 (LLTL…CSAL), 150 to 170 (ALIA…APVL), 198 to 218 (VYGL…AALM), and 226 to 246 (YALM…YCSF).

Its subcellular location is the cell inner membrane. Its function is as follows. (Microbial infection) Probably transports the toxic C-terminal region of CdiA-2 from B.pseudomallei strain 1026b across the inner membrane to the cytoplasm, where CdiA has a toxic effect. Expression in E.coli makes the bacteria sensitive to the tRNase domain of B.pseudomallei strain 1026b CdiA-2. This is Probable inner membrane protein BTH_II0599 from Burkholderia thailandensis (strain ATCC 700388 / DSM 13276 / CCUG 48851 / CIP 106301 / E264).